A 140-amino-acid chain; its full sequence is ATP synthase epsilon chain 1 (140 aa).

This sequence belongs to the ATPase epsilon chain family. As to quaternary structure, F-type ATPases have 2 components, CF(1) - the catalytic core - and CF(0) - the membrane proton channel. CF(1) has five subunits: alpha(3), beta(3), gamma(1), delta(1), epsilon(1). CF(0) has three main subunits: a, b and c.

It is found in the cell inner membrane. Produces ATP from ADP in the presence of a proton gradient across the membrane. This is ATP synthase epsilon chain 1 from Methylococcus capsulatus (strain ATCC 33009 / NCIMB 11132 / Bath).